The primary structure comprises 161 residues: Small ribosomal subunit protein bS16 (161 aa).

The disordered stretch occupies residues 114 to 161; the sequence is EGGPTTEATKPKKKSPAKKAKGGEGDADAAAEKVEASAEGEQTESAES. Positions 124–133 are enriched in basic residues; the sequence is PKKKSPAKKA.

The protein belongs to the bacterial ribosomal protein bS16 family.

This chain is Small ribosomal subunit protein bS16, found in Mycobacterium marinum (strain ATCC BAA-535 / M).